Here is a 344-residue protein sequence, read N- to C-terminus: Sorting nexin-16 (344 aa).

A compositionally biased stretch (pro residues) spans 1-10; that stretch reads MATPYVPVPM. 2 disordered regions span residues 1–49 and 83–105; these read MATP…DSSV and SIEY…NWED. Over residues 14–26 the composition is skewed to polar residues; sequence NSASSFTNNRNQR. The segment covering 27–40 has biased composition (low complexity); sequence SSSFGSVSTSSNSS. The span at 88-105 shows a compositional bias: basic and acidic residues; the sequence is ARPRDTEEQHPDALNWED. In terms of domain architecture, PX spans 105–218; that stretch reads DRPSTPTILG…EFLCLDDPPG (114 aa). A 1,2-diacyl-sn-glycero-3-phospho-(1D-myo-inositol-3-phosphate) contacts are provided by Arg-144, Thr-146, and Arg-184. At Ser-222 the chain carries Phosphoserine. Positions 223–278 form a coiled coil; sequence LEESRAFCETLEETNYHLQRELLEKQKEVESLKKLLGEKQLHIDALETRIRTLSLE.

This sequence belongs to the sorting nexin family. Homooligomer. Interacts with EGFR.

The protein localises to the early endosome membrane. It localises to the late endosome membrane. It is found in the cytoplasm. The protein resides in the lysosome. Its function is as follows. May be involved in several stages of intracellular trafficking. Plays a role in protein transport from early to late endosomes. Plays a role in protein transport to the lysosome. Promotes degradation of EGFR after EGF signaling. This Rattus norvegicus (Rat) protein is Sorting nexin-16 (Snx16).